Reading from the N-terminus, the 235-residue chain is Secretory carrier-associated membrane protein 5 (235 aa).

Topologically, residues 1–39 (MAEKVNNFPPLPKFIPLKPCFYQDFEADIPPQHLSLTKR) are cytoplasmic. The chain crosses the membrane as a helical span at residues 40–60 (LYYLWMLNSVTLAVNLVGCLA). Residues 61 to 67 (WLIGGGG) are Extracellular-facing. A helical transmembrane segment spans residues 68–88 (ATNFGLAFLWLILFTPCSYVC). At 89–102 (WFRPIYKAFKTDSS) the chain is on the cytoplasmic side. A helical membrane pass occupies residues 103 to 125 (FSFMAFFFTFMAQLVISIIQAVG). Residues 126-148 (IPGWGVCGWIATISFFGTNIGSA) lie on the Extracellular side of the membrane. A helical membrane pass occupies residues 149–169 (VVMLIPTVMFTVVAVFSFIAL). Residues 170 to 235 (SMVHKFYRGS…TPNYTYSNEM (66 aa)) are Cytoplasmic-facing.

Belongs to the SCAMP family. SCAMP5 subfamily. Interacts (via C-terminal part) with SYT1 and SYT2; interaction with synaptotagmins making a link with the SNARE molecules. Interacts with SLC9A7.

It localises to the cell membrane. The protein localises to the golgi apparatus membrane. The protein resides in the golgi apparatus. It is found in the trans-Golgi network membrane. Its subcellular location is the recycling endosome membrane. It localises to the cytoplasmic vesicle. The protein localises to the secretory vesicle. The protein resides in the synaptic vesicle membrane. Required for the calcium-dependent exocytosis of signal sequence-containing cytokines such as CCL5. Probably acts in cooperation with the SNARE machinery. The polypeptide is Secretory carrier-associated membrane protein 5 (Scamp5) (Rattus norvegicus (Rat)).